The chain runs to 899 residues: Probable dipeptidyl-aminopeptidase B (899 aa).

The interval 1–69 (MKLDRMRVGS…NHNGRTQGNY (69 aa)) is disordered. Residues 1–99 (MKLDRMRVGS…NGKSSQRRTL (99 aa)) lie on the Cytoplasmic side of the membrane. Low complexity predominate over residues 32–43 (DSSSTASISLTL). Residues 100–120 (IVFWLLVALCVGGWAVAFLFF) form a helical; Signal-anchor for type II membrane protein membrane-spanning segment. At 121–899 (VTSPGNKTST…KYFNLSFLGH (779 aa)) the chain is on the vacuolar side. Residues 128 to 139 (TSTSPHSGSNSP) are compositionally biased toward polar residues. The tract at residues 128-149 (TSTSPHSGSNSPEGDVTKPGIP) is disordered. N-linked (GlcNAc...) asparagine glycans are attached at residues Asn-212, Asn-308, and Asn-360. Ser-765 functions as the Charge relay system in the catalytic mechanism. Residues Asn-819, Asn-824, and Asn-827 are each glycosylated (N-linked (GlcNAc...) asparagine). Active-site charge relay system residues include Asp-842 and His-875. Asn-893 carries N-linked (GlcNAc...) asparagine glycosylation.

The protein belongs to the peptidase S9B family.

The protein localises to the vacuole membrane. The enzyme catalyses Release of an N-terminal dipeptide, Xaa-Yaa-|-Zaa-, from a polypeptide, preferentially when Yaa is Pro, provided Zaa is neither Pro nor hydroxyproline.. Its function is as follows. Type IV dipeptidyl-peptidase which removes N-terminal dipeptides sequentially from polypeptides having unsubstituted N-termini provided that the penultimate residue is proline. The protein is Probable dipeptidyl-aminopeptidase B (DAPB) of Trichophyton verrucosum (strain HKI 0517).